A 501-amino-acid chain; its full sequence is Glutamyl-tRNA(Gln) amidotransferase subunit A (501 aa).

Residues lysine 84 and serine 159 each act as charge relay system in the active site. Residue serine 183 is the Acyl-ester intermediate of the active site.

Belongs to the amidase family. GatA subfamily. In terms of assembly, heterotrimer of A, B and C subunits.

The enzyme catalyses L-glutamyl-tRNA(Gln) + L-glutamine + ATP + H2O = L-glutaminyl-tRNA(Gln) + L-glutamate + ADP + phosphate + H(+). In terms of biological role, allows the formation of correctly charged Gln-tRNA(Gln) through the transamidation of misacylated Glu-tRNA(Gln) in organisms which lack glutaminyl-tRNA synthetase. The reaction takes place in the presence of glutamine and ATP through an activated gamma-phospho-Glu-tRNA(Gln). The protein is Glutamyl-tRNA(Gln) amidotransferase subunit A of Streptomyces avermitilis (strain ATCC 31267 / DSM 46492 / JCM 5070 / NBRC 14893 / NCIMB 12804 / NRRL 8165 / MA-4680).